A 161-amino-acid chain; its full sequence is C-type natriuretic peptide (161 aa).

The first 22 residues, 1-22, serve as a signal peptide directing secretion; the sequence is MFASRLAALGLLLLALVLDGKP. The tract at residues 19-135 is disordered; sequence DGKPAPPPQP…GGGGSRRLKG (117 aa). Positions 23 to 139 are excised as a propeptide; sequence APPPQPLRKA…SRRLKGLPKK (117 aa). Composition is skewed to low complexity over residues 29–60 and 76–93; these read LRKAPAGGTTALQRQLTEQQQQQQQAEGSSGP and AAPTAPKSKGAAASAASR. Residues 94–104 are compositionally biased toward basic and acidic residues; that stretch reads LLRDLRPDGKQ. Gly residues predominate over residues 120 to 130; the sequence is GGGGGGGGGGS. A disulfide bridge links C145 with C161.

The protein belongs to the natriuretic peptide family. As to expression, expressed by the venom gland.

The protein localises to the secreted. Snake venom natriuretic peptide that has a vasorelaxant activity in rat aortic strips and a diuretic potency in anesthetized rats. May act by activating natriuretic receptors (NPR1 and/or NPR2). This is C-type natriuretic peptide from Rhabdophis tigrinus tigrinus (Tiger keelback snake).